The chain runs to 166 residues: Cyclic pyranopterin monophosphate synthase (166 aa).

Substrate contacts are provided by residues 75–77 (LCH) and 113–114 (ME). D128 is an active-site residue.

The protein belongs to the MoaC family. Homohexamer; trimer of dimers.

It catalyses the reaction (8S)-3',8-cyclo-7,8-dihydroguanosine 5'-triphosphate = cyclic pyranopterin phosphate + diphosphate. It functions in the pathway cofactor biosynthesis; molybdopterin biosynthesis. Catalyzes the conversion of (8S)-3',8-cyclo-7,8-dihydroguanosine 5'-triphosphate to cyclic pyranopterin monophosphate (cPMP). This Thermomicrobium roseum (strain ATCC 27502 / DSM 5159 / P-2) protein is Cyclic pyranopterin monophosphate synthase.